Consider the following 253-residue polypeptide: Hydroxyacylglutathione hydrolase (253 aa).

Residues His-54, His-56, Asp-58, His-59, His-112, Asp-131, and His-169 each coordinate Zn(2+).

It belongs to the metallo-beta-lactamase superfamily. Glyoxalase II family. Monomer. The cofactor is Zn(2+).

The enzyme catalyses an S-(2-hydroxyacyl)glutathione + H2O = a 2-hydroxy carboxylate + glutathione + H(+). It functions in the pathway secondary metabolite metabolism; methylglyoxal degradation; (R)-lactate from methylglyoxal: step 2/2. Thiolesterase that catalyzes the hydrolysis of S-D-lactoyl-glutathione to form glutathione and D-lactic acid. The polypeptide is Hydroxyacylglutathione hydrolase (Bartonella quintana (strain Toulouse) (Rochalimaea quintana)).